The chain runs to 605 residues: Probable serine/threonine-protein kinase DDB_G0286481 (605 aa).

The helical transmembrane segment at 5 to 25 (YQIFFLLYLLCILYVISCGYI) threads the bilayer. Asn-53 carries N-linked (GlcNAc...) asparagine glycosylation. 2 stretches are compositionally biased toward low complexity: residues 54 to 81 (SSNN…NNNN) and 89 to 104 (NCNN…NKSN). The segment at 54-170 (SSNNNNNNNN…LGGSMGSGSQ (117 aa)) is disordered. Asn-92, Asn-93, Asn-97, and Asn-101 each carry an N-linked (GlcNAc...) asparagine glycan. Basic residues predominate over residues 105–123 (IKNKQHHHHSNFRNRRGKS). N-linked (GlcNAc...) asparagine glycosylation occurs at Asn-127. Residues 144–155 (QSSSYDTSELHQ) are compositionally biased toward polar residues. N-linked (GlcNAc...) asparagine glycosylation is present at Asn-280. The Protein kinase domain maps to 312-597 (YEVIQKIGRG…AKEAMKHPYF (286 aa)). ATP is bound by residues 318-326 (IGRGKYSEV) and Lys-341. Residue Asn-390 is glycosylated (N-linked (GlcNAc...) asparagine). Asp-429 serves as the catalytic Proton acceptor. An N-linked (GlcNAc...) asparagine glycan is attached at Asn-601.

It belongs to the protein kinase superfamily. CMGC Ser/Thr protein kinase family.

Its subcellular location is the membrane. The catalysed reaction is L-seryl-[protein] + ATP = O-phospho-L-seryl-[protein] + ADP + H(+). The enzyme catalyses L-threonyl-[protein] + ATP = O-phospho-L-threonyl-[protein] + ADP + H(+). The protein is Probable serine/threonine-protein kinase DDB_G0286481 of Dictyostelium discoideum (Social amoeba).